Consider the following 352-residue polypeptide: NAD(P)H pyrophosphatase NUDT13, mitochondrial (352 aa).

A mitochondrion-targeting transit peptide spans 1 to 20 (MSLYCGIACRRKFFWCYRLL). The Nudix hydrolase domain maps to 196–323 (PQMAPVAITL…PYTQQQNGTF (128 aa)). The short motif at 216–240 (RQSSFPKGMYSALAGFCDIGESVEE) is the Nudix box element.

The protein belongs to the Nudix hydrolase family. It depends on Mg(2+) as a cofactor. Mn(2+) serves as cofactor. In terms of tissue distribution, highly expressed in metastasis-suppressed chromosome 6 melanoma hybrids.

Its subcellular location is the mitochondrion. It carries out the reaction NADH + H2O = reduced beta-nicotinamide D-ribonucleotide + AMP + 2 H(+). It catalyses the reaction NAD(+) + H2O = beta-nicotinamide D-ribonucleotide + AMP + 2 H(+). The enzyme catalyses NADPH + H2O = reduced beta-nicotinamide D-ribonucleotide + adenosine 2',5'-bisphosphate + 2 H(+). In terms of biological role, NAD(P)H pyrophosphatase that hydrolyzes NADH into NMNH and AMP, and NADPH into NMNH and 2',5'-ADP. Has a marked preference for the reduced pyridine nucleotides. Does not show activity toward NAD-capped RNAs; the NAD-cap is an atypical cap present at the 5'-end of some RNAs. The polypeptide is NAD(P)H pyrophosphatase NUDT13, mitochondrial (Homo sapiens (Human)).